Here is a 119-residue protein sequence, read N- to C-terminus: Large ribosomal subunit protein bL20 (119 aa).

The protein belongs to the bacterial ribosomal protein bL20 family.

Binds directly to 23S ribosomal RNA and is necessary for the in vitro assembly process of the 50S ribosomal subunit. It is not involved in the protein synthesizing functions of that subunit. This chain is Large ribosomal subunit protein bL20, found in Geobacillus sp. (strain WCH70).